The sequence spans 172 residues: RNA silencing suppressor p19 (172 aa).

Residues 1–15 show a composition bias toward basic and acidic residues; that stretch reads MERAIQGNDAREQAY. The segment at 1 to 38 is disordered; that stretch reads MERAIQGNDAREQAYGERWNGGPGGSTSPFQLPDESPS.

The protein belongs to the tombusvirus protein p19 family. In terms of assembly, homodimer.

Functionally, viral suppressor of RNA silencing which binds specifically to silencing RNAs (siRNAs). Acts as a molecular caliper to specifically select siRNAs based on the length of the duplex region of the RNA. This chain is RNA silencing suppressor p19, found in Tomato bushy stunt virus (strain A23) (TBSV).